A 245-amino-acid polypeptide reads, in one-letter code: Leucyl/phenylalanyl-tRNA--protein transferase (245 aa).

It belongs to the L/F-transferase family.

The protein resides in the cytoplasm. It carries out the reaction N-terminal L-lysyl-[protein] + L-leucyl-tRNA(Leu) = N-terminal L-leucyl-L-lysyl-[protein] + tRNA(Leu) + H(+). It catalyses the reaction N-terminal L-arginyl-[protein] + L-leucyl-tRNA(Leu) = N-terminal L-leucyl-L-arginyl-[protein] + tRNA(Leu) + H(+). The enzyme catalyses L-phenylalanyl-tRNA(Phe) + an N-terminal L-alpha-aminoacyl-[protein] = an N-terminal L-phenylalanyl-L-alpha-aminoacyl-[protein] + tRNA(Phe). Functionally, functions in the N-end rule pathway of protein degradation where it conjugates Leu, Phe and, less efficiently, Met from aminoacyl-tRNAs to the N-termini of proteins containing an N-terminal arginine or lysine. The protein is Leucyl/phenylalanyl-tRNA--protein transferase of Paraburkholderia phymatum (strain DSM 17167 / CIP 108236 / LMG 21445 / STM815) (Burkholderia phymatum).